The primary structure comprises 299 residues: GTPase Era (299 aa).

In terms of domain architecture, Era-type G spans K2 to E170. Residues G10–S17 are G1. G10–S17 provides a ligand contact to GTP. A G2 region spans residues Q36–N40. The segment at D57–G60 is G3. Residues D57 to I61 and N119 to D122 contribute to the GTP site. Residues N119–D122 form a G4 region. The interval T149–A151 is G5. Positions T201 to R278 constitute a KH type-2 domain.

This sequence belongs to the TRAFAC class TrmE-Era-EngA-EngB-Septin-like GTPase superfamily. Era GTPase family. As to quaternary structure, monomer.

It localises to the cytoplasm. The protein localises to the cell inner membrane. In terms of biological role, an essential GTPase that binds both GDP and GTP, with rapid nucleotide exchange. Plays a role in 16S rRNA processing and 30S ribosomal subunit biogenesis and possibly also in cell cycle regulation and energy metabolism. This chain is GTPase Era, found in Thermosipho melanesiensis (strain DSM 12029 / CIP 104789 / BI429).